Consider the following 290-residue polypeptide: ATP synthase gamma chain (290 aa).

Belongs to the ATPase gamma chain family. In terms of assembly, F-type ATPases have 2 components, CF(1) - the catalytic core - and CF(0) - the membrane proton channel. CF(1) has five subunits: alpha(3), beta(3), gamma(1), delta(1), epsilon(1). CF(0) has three main subunits: a, b and c.

Its subcellular location is the cell membrane. In terms of biological role, produces ATP from ADP in the presence of a proton gradient across the membrane. The gamma chain is believed to be important in regulating ATPase activity and the flow of protons through the CF(0) complex. The sequence is that of ATP synthase gamma chain from Roseiflexus sp. (strain RS-1).